Consider the following 306-residue polypeptide: Reticulocalbin-2 (306 aa).

The signal sequence occupies residues 1–22; that stretch reads MESPTLLGLLLLLLGGPGTSLG. EF-hand domains lie at 50-85, 86-121, 144-173, 175-210, 226-251, and 252-287; these read EQQKRLKVIISRIDVDLDGFLTEAELSSWIQHSFKS, YIIEDAKQQFQHYDKDGDGRVSWEEYNIQMYDRVID, KKRFQKANKDGDSHLDFEEFAAFEHPEEAD, MKEFVIQESLEEHDKDGDGFVSLQEFLGDYRRDPAA, NDYDKDKDGKLSPKELLTWVMPNNEG, and LAQEEAVHLLDEMDLDGDRRLSANEILENQDLFLNS. Ca(2+)-binding residues include aspartate 99, aspartate 101, aspartate 103, arginine 105, and glutamate 110. Positions 188, 190, 192, 199, 229, 231, 233, 235, 240, 265, 267, 269, 271, and 276 each coordinate Ca(2+).

Belongs to the CREC family. May bind phospholipase A2, since the rat reticulocalbin-2 has been isolated on the phospholipase complex taipoxin columns. As to expression, expressed by the venom gland.

The protein localises to the secreted. This chain is Reticulocalbin-2, found in Crotalus adamanteus (Eastern diamondback rattlesnake).